A 951-amino-acid polypeptide reads, in one-letter code: Cation channel sperm-associated auxiliary subunit epsilon (951 aa).

The first 19 residues, 1-19 (MSAREVAVLLLWLSCYGSA), serve as a signal peptide directing secretion. The Extracellular portion of the chain corresponds to 20 to 903 (LWRYSTNSPN…ETFGLIPSPS (884 aa)). 4 disulfide bridges follow: Cys57/Cys71, Cys101/Cys206, Cys246/Cys336, and Cys410/Cys413. Residues Asn61 and Asn114 are each glycosylated (N-linked (GlcNAc...) asparagine). N-linked (GlcNAc...) asparagine glycosylation is found at Asn414, Asn472, Asn487, Asn493, and Asn535. 4 disulfides stabilise this stretch: Cys583–Cys690, Cys703–Cys885, Cys719–Cys752, and Cys804–Cys835. Asn796 carries an N-linked (GlcNAc...) asparagine glycan. Residues Asn854, Asn881, and Asn886 are each glycosylated (N-linked (GlcNAc...) asparagine). Residues 904-924 (VYLVASFLFVLMLLFFTILVL) form a helical membrane-spanning segment. The Cytoplasmic portion of the chain corresponds to 925–951 (SYFRYMRIYRRYIYEPLHKPQRKRKKN).

It belongs to the CATSPERD family. As to quaternary structure, component of the CatSper complex or CatSpermasome composed of the core pore-forming members CATSPER1, CATSPER2, CATSPER3 and CATSPER4 as well as auxiliary members CATSPERB, CATSPERG, CATSPERD, CATSPERE, CATSPERZ, C2CD6/CATSPERT, TMEM249, TMEM262 and EFCAB9. HSPA1 may be an additional auxiliary complex member. The core complex members CATSPER1, CATSPER2, CATSPER3 and CATSPER4 form a heterotetrameric channel. The auxiliary CATSPERB, CATSPERG, CATSPERD and CATSPERE subunits form a pavilion-like structure over the pore which stabilizes the complex through interactions with CATSPER4, CATSPER3, CATSPER1 and CATSPER2 respectively. TMEM262/CATSPERH interacts with CATSPERB, further stabilizing the complex. C2CD6/CATSPERT interacts at least with CATSPERD and is required for targeting the CatSper complex in the flagellar membrane.

Its subcellular location is the cell projection. The protein localises to the cilium. It is found in the flagellum membrane. Its function is as follows. Auxiliary component of the CatSper complex, a complex involved in sperm cell hyperactivation. Sperm cell hyperactivation is needed for sperm motility which is essential late in the preparation of sperm for fertilization. This chain is Cation channel sperm-associated auxiliary subunit epsilon, found in Homo sapiens (Human).